The primary structure comprises 307 residues: Malate dehydrogenase (307 aa).

Residues 8–13 and D32 each bind NAD(+); that span reads GAGNVG. The substrate site is built by R81 and R87. Residues N94 and 117–119 contribute to the NAD(+) site; that span reads VSN. Residues N119 and R150 each coordinate substrate. The active-site Proton acceptor is the H174.

It belongs to the LDH/MDH superfamily. MDH type 3 family.

It catalyses the reaction (S)-malate + NAD(+) = oxaloacetate + NADH + H(+). Functionally, catalyzes the reversible oxidation of malate to oxaloacetate. In Dehalococcoides mccartyi (strain ATCC BAA-2100 / JCM 16839 / KCTC 5957 / BAV1), this protein is Malate dehydrogenase.